The chain runs to 106 residues: ATP-dependent Clp protease adapter protein ClpS (106 aa).

This sequence belongs to the ClpS family. Binds to the N-terminal domain of the chaperone ClpA.

Functionally, involved in the modulation of the specificity of the ClpAP-mediated ATP-dependent protein degradation. The sequence is that of ATP-dependent Clp protease adapter protein ClpS from Escherichia coli O127:H6 (strain E2348/69 / EPEC).